Consider the following 250-residue polypeptide: Ubiquinone/menaquinone biosynthesis C-methyltransferase UbiE (250 aa).

S-adenosyl-L-methionine is bound by residues Thr-73, Asp-94, and 122 to 123 (DA).

The protein belongs to the class I-like SAM-binding methyltransferase superfamily. MenG/UbiE family.

It catalyses the reaction a 2-demethylmenaquinol + S-adenosyl-L-methionine = a menaquinol + S-adenosyl-L-homocysteine + H(+). The catalysed reaction is a 2-methoxy-6-(all-trans-polyprenyl)benzene-1,4-diol + S-adenosyl-L-methionine = a 5-methoxy-2-methyl-3-(all-trans-polyprenyl)benzene-1,4-diol + S-adenosyl-L-homocysteine + H(+). The protein operates within quinol/quinone metabolism; menaquinone biosynthesis; menaquinol from 1,4-dihydroxy-2-naphthoate: step 2/2. It functions in the pathway cofactor biosynthesis; ubiquinone biosynthesis. In terms of biological role, methyltransferase required for the conversion of demethylmenaquinol (DMKH2) to menaquinol (MKH2) and the conversion of 2-polyprenyl-6-methoxy-1,4-benzoquinol (DDMQH2) to 2-polyprenyl-3-methyl-6-methoxy-1,4-benzoquinol (DMQH2). The protein is Ubiquinone/menaquinone biosynthesis C-methyltransferase UbiE of Coxiella burnetii (strain RSA 331 / Henzerling II).